Reading from the N-terminus, the 177-residue chain is MNFKQYSPEELKECSMIEVVHSVLGDKRQATTFNELVQEIAQVLGLSQEQVNAKLAQFYTDLNIDGRFINLGENRWGLRSWYPYEQIDEEILPQPKPKKKRKVEEDGFDDYIEEDEDDFDDADGNADEEDDVEDLDKVLEEEDGDDDDLDDLEEDEEDDFAEEELEYDETEEEEEEL.

Residues 14 to 81 (CSMIEVVHSV…GENRWGLRSW (68 aa)) form the HTH HARE-type domain. Positions 91-177 (ILPQPKPKKK…DETEEEEEEL (87 aa)) are disordered. The span at 106 to 177 (DGFDDYIEED…DETEEEEEEL (72 aa)) shows a compositional bias: acidic residues.

This sequence belongs to the RpoE family. RNAP is composed of a core of 2 alpha, a beta and a beta' subunits. The core is associated with a delta subunit and one of several sigma factors.

Functionally, participates in both the initiation and recycling phases of transcription. In the presence of the delta subunit, RNAP displays an increased specificity of transcription, a decreased affinity for nucleic acids, and an increased efficiency of RNA synthesis because of enhanced recycling. The chain is Probable DNA-directed RNA polymerase subunit delta from Bacillus cereus (strain G9842).